Reading from the N-terminus, the 342-residue chain is S-adenosylmethionine:tRNA ribosyltransferase-isomerase (342 aa).

Belongs to the QueA family. In terms of assembly, monomer.

The protein localises to the cytoplasm. It catalyses the reaction 7-aminomethyl-7-carbaguanosine(34) in tRNA + S-adenosyl-L-methionine = epoxyqueuosine(34) in tRNA + adenine + L-methionine + 2 H(+). It participates in tRNA modification; tRNA-queuosine biosynthesis. Its function is as follows. Transfers and isomerizes the ribose moiety from AdoMet to the 7-aminomethyl group of 7-deazaguanine (preQ1-tRNA) to give epoxyqueuosine (oQ-tRNA). The polypeptide is S-adenosylmethionine:tRNA ribosyltransferase-isomerase (Geobacillus kaustophilus (strain HTA426)).